The sequence spans 354 residues: UDP-3-O-acylglucosamine N-acyltransferase (354 aa).

The Proton acceptor role is filled by His247.

This sequence belongs to the transferase hexapeptide repeat family. LpxD subfamily. Homotrimer.

It carries out the reaction a UDP-3-O-[(3R)-3-hydroxyacyl]-alpha-D-glucosamine + a (3R)-hydroxyacyl-[ACP] = a UDP-2-N,3-O-bis[(3R)-3-hydroxyacyl]-alpha-D-glucosamine + holo-[ACP] + H(+). It functions in the pathway bacterial outer membrane biogenesis; LPS lipid A biosynthesis. Functionally, catalyzes the N-acylation of UDP-3-O-acylglucosamine using 3-hydroxyacyl-ACP as the acyl donor. Is involved in the biosynthesis of lipid A, a phosphorylated glycolipid that anchors the lipopolysaccharide to the outer membrane of the cell. The polypeptide is UDP-3-O-acylglucosamine N-acyltransferase (Chlamydia trachomatis serovar A (strain ATCC VR-571B / DSM 19440 / HAR-13)).